We begin with the raw amino-acid sequence, 329 residues long: Malate dehydrogenase (329 aa).

12–18 lines the NAD(+) pocket; the sequence is GAAGQIG. Substrate is bound by residues Arg-95 and Arg-101. NAD(+)-binding positions include Asn-108, Gln-115, and 132 to 134; that span reads VGN. The substrate site is built by Asn-134 and Arg-165. The active-site Proton acceptor is His-190.

It belongs to the LDH/MDH superfamily. MDH type 2 family.

It carries out the reaction (S)-malate + NAD(+) = oxaloacetate + NADH + H(+). Its function is as follows. Catalyzes the reversible oxidation of malate to oxaloacetate. The chain is Malate dehydrogenase from Bordetella avium (strain 197N).